A 502-amino-acid polypeptide reads, in one-letter code: Glutamate--tRNA ligase (502 aa).

A 'HIGH' region motif is present at residues 9 to 19; that stretch reads PSPTGFPHVGT. Residues 250 to 254 carry the 'KMSKS' region motif; sequence KLSKR. Lysine 253 contacts ATP.

Belongs to the class-I aminoacyl-tRNA synthetase family. Glutamate--tRNA ligase type 1 subfamily. As to quaternary structure, monomer.

It localises to the cytoplasm. It catalyses the reaction tRNA(Glu) + L-glutamate + ATP = L-glutamyl-tRNA(Glu) + AMP + diphosphate. Functionally, catalyzes the attachment of glutamate to tRNA(Glu) in a two-step reaction: glutamate is first activated by ATP to form Glu-AMP and then transferred to the acceptor end of tRNA(Glu). The protein is Glutamate--tRNA ligase of Acinetobacter baylyi (strain ATCC 33305 / BD413 / ADP1).